Here is a 23-residue protein sequence, read N- to C-terminus: GLWQLIKDKFKDAATGFVTGIQS.

In terms of tissue distribution, expressed by the skin dorsal glands.

The protein resides in the secreted. Functionally, has no antimicrobial activity. The polypeptide is Dahlein-4.3 (Ranoidea dahlii (Dahl's aquatic frog)).